A 356-amino-acid chain; its full sequence is Arginine kinase (356 aa).

The Phosphagen kinase N-terminal domain maps to 8–91 (EKLEAGFKKL…FDPIIEDYHG (84 aa)). 64-68 (GVGIY) serves as a coordination point for substrate. In terms of domain architecture, Phosphagen kinase C-terminal spans 119–356 (YVISTRVRCG…LELIKIEGSL (238 aa)). ATP-binding positions include 122–126 (STRVR) and H185. Substrate is bound at residue E225. R229 serves as a coordination point for ATP. C271 contributes to the substrate binding site. ATP is bound by residues 280-284 (RASVH) and 309-314 (RGSTGE). E314 is a binding site for substrate.

This sequence belongs to the ATP:guanido phosphotransferase family.

It catalyses the reaction L-arginine + ATP = N(omega)-phospho-L-arginine + ADP + H(+). This is Arginine kinase (ARGK) from Schistocerca americana (American grasshopper).